We begin with the raw amino-acid sequence, 437 residues long: Enolase (437 aa).

Position 162 (Gln162) interacts with (2R)-2-phosphoglycerate. Catalysis depends on Glu204, which acts as the Proton donor. 3 residues coordinate Mg(2+): Asp251, Glu297, and Asp324. Residues Lys349, Arg378, Ser379, and Lys400 each coordinate (2R)-2-phosphoglycerate. Lys349 functions as the Proton acceptor in the catalytic mechanism.

The protein belongs to the enolase family. Mg(2+) is required as a cofactor.

It is found in the cytoplasm. It localises to the secreted. Its subcellular location is the cell surface. It carries out the reaction (2R)-2-phosphoglycerate = phosphoenolpyruvate + H2O. It participates in carbohydrate degradation; glycolysis; pyruvate from D-glyceraldehyde 3-phosphate: step 4/5. Its function is as follows. Catalyzes the reversible conversion of 2-phosphoglycerate (2-PG) into phosphoenolpyruvate (PEP). It is essential for the degradation of carbohydrates via glycolysis. The polypeptide is Enolase (Chlorobium limicola (strain DSM 245 / NBRC 103803 / 6330)).